A 118-amino-acid polypeptide reads, in one-letter code: Large ribosomal subunit protein bL20 (118 aa).

The protein belongs to the bacterial ribosomal protein bL20 family.

In terms of biological role, binds directly to 23S ribosomal RNA and is necessary for the in vitro assembly process of the 50S ribosomal subunit. It is not involved in the protein synthesizing functions of that subunit. The protein is Large ribosomal subunit protein bL20 of Pseudomonas aeruginosa (strain LESB58).